The sequence spans 173 residues: GTP-dependent dephospho-CoA kinase (173 aa).

The GTP site is built by D52, V53, V54, D71, K73, and D122.

Belongs to the GTP-dependent DPCK family.

It catalyses the reaction 3'-dephospho-CoA + GTP = GDP + CoA + H(+). It functions in the pathway cofactor biosynthesis; coenzyme A biosynthesis. Its function is as follows. Catalyzes the GTP-dependent phosphorylation of the 3'-hydroxyl group of dephosphocoenzyme A to form coenzyme A (CoA). This chain is GTP-dependent dephospho-CoA kinase, found in Metallosphaera sedula (strain ATCC 51363 / DSM 5348 / JCM 9185 / NBRC 15509 / TH2).